The sequence spans 339 residues: Dihydroorotase (339 aa).

Positions 12 and 14 each coordinate Zn(2+). Residues 14 to 16 and Asn40 each bind substrate; that span reads HVR. Lys94, His133, His167, and Asp239 together coordinate Zn(2+). Residue Lys94 is modified to N6-carboxylysine. His133 is a substrate binding site. Asp239 is an active-site residue. Substrate contacts are provided by His243 and Ala255.

The protein belongs to the metallo-dependent hydrolases superfamily. DHOase family. Class II DHOase subfamily. Homodimer. Zn(2+) serves as cofactor.

The catalysed reaction is (S)-dihydroorotate + H2O = N-carbamoyl-L-aspartate + H(+). It functions in the pathway pyrimidine metabolism; UMP biosynthesis via de novo pathway; (S)-dihydroorotate from bicarbonate: step 3/3. Functionally, catalyzes the reversible cyclization of carbamoyl aspartate to dihydroorotate. The polypeptide is Dihydroorotase (Helicobacter pylori (strain HPAG1)).